The chain runs to 307 residues: Cyclooctat-9-en-7-ol synthase (307 aa).

Mg(2+)-binding residues include Asp110, Asn220, Ser224, and Glu228. A DDXXD motif; degenerate motif is present at residues 110–113 (DDMD). The NSE/DTE motif motif lies at 220-228 (NDFYSYDRE).

This sequence belongs to the terpene synthase family. Homodimer. Mg(2+) is required as a cofactor.

It carries out the reaction geranylgeranyl diphosphate + H2O = cyclooctat-9-en-7-ol + diphosphate. In terms of biological role, catalyzes the cyclization of the linear isoprenoid intermediate geranylgeranyl diphosphate to tricycclic cyclooctat-9-en-7-ol in the cyclooctatin biosynthesis pathway. Cyclooctatin is a potent inhibitor of lysophospholipase. This Streptomyces melanosporofaciens protein is Cyclooctat-9-en-7-ol synthase.